The chain runs to 409 residues: Coagulation factor IX (409 aa).

Residues Tyr1, Asn2, Glu7, Glu8, Glu16, Glu18, Glu21, Glu22, Glu27, Glu28, and Glu31 each contribute to the Ca(2+) site. The 47-residue stretch at 1–47 (YNSGKLEESFVRGNLERECIEEKCSFEEAREVFENTEKTNEFWKQYV) folds into the Gla domain. A 4-carboxyglutamate mark is found at Glu7, Glu8, Glu16, Glu18, Glu21, Glu22, Glu27, Glu28, Glu31, Glu34, Glu37, and Glu41. Residue Glu16 participates in Mg(2+) binding. Cys19 and Cys24 are oxidised to a cystine. Glu21 contacts Mg(2+). Glu27 contributes to the Mg(2+) binding site. Glu31 is a binding site for Mg(2+). Glu37, Glu41, Asp48, Gly49, and Gln51 together coordinate Ca(2+). Residues Glu37 and Glu41 each coordinate Mg(2+). The region spanning 48-84 (DGDQCEPNPCLNGGLCKDDINSYECWCQVGFEGKNCE) is the EGF-like 1; calcium-binding domain. 10 disulfides stabilise this stretch: Cys52/Cys63, Cys57/Cys72, Cys74/Cys83, Cys89/Cys100, Cys96/Cys110, Cys112/Cys125, Cys133/Cys291, Cys208/Cys224, Cys338/Cys352, and Cys363/Cys391. Residues Asp65 and Asp66 each coordinate Ca(2+). Asp65 is subject to (3R)-3-hydroxyaspartate. Ser69 is modified (phosphoserine). Residues 85–126 (LDATCNIKNGRCKQFCKTGADSKVLCSCTTGYRLAPDQKSCK) enclose the EGF-like 2 domain. A propeptide spans 148–182 (AEIIFSNMDYENSTEVEPILDSLTESNQSSDDFIR) (activation peptide). Sulfotyrosine is present on Tyr157. A Phosphoserine modification is found at Ser160. Thr161 bears the Phosphothreonine; alternate mark. Residue Thr161 is glycosylated (O-linked (GalNAc...) threonine; alternate). A glycan (O-linked (GalNAc...) threonine) is linked at Thr171. The N-linked (GlcNAc...) asparagine glycan is linked to Asn174. The region spanning 183–409 (IVGGENAKPG…YTKVSRYVNW (227 aa)) is the Peptidase S1 domain. His223 functions as the Charge relay system in the catalytic mechanism. Ca(2+) contacts are provided by Glu237, Asn239, Glu242, Glu244, and Glu247. Asn262 carries an N-linked (GlcNAc...) asparagine glycan. The active-site Charge relay system is Asp271. Catalysis depends on Ser367, which acts as the Charge relay system.

The protein belongs to the peptidase S1 family. Heterodimer of a light chain and a heavy chain; disulfide-linked. Interacts (inactive and activated) with F11 (activated) in calcium-dependent manner. Interacts with SERPINC1. Post-translationally, activated by factor XIa, which excises the activation peptide. The propeptide can also be removed by snake venom protease. Activated by coagulation factor VIIa-tissue factor (F7-F3) complex in calcium-dependent manner. The iron and 2-oxoglutarate dependent 3-hydroxylation of aspartate and asparagine is (R) stereospecific within EGF domains.

It is found in the secreted. It carries out the reaction Selective cleavage of Arg-|-Ile bond in factor X to form factor Xa.. Factor IX is a vitamin K-dependent plasma protein that participates in the intrinsic pathway of blood coagulation by converting factor X to its active form in the presence of Ca(2+) ions, phospholipids, and factor VIIIa. The polypeptide is Coagulation factor IX (F9) (Sus scrofa (Pig)).